The following is a 198-amino-acid chain: LIM domain-containing protein D (198 aa).

The LIM zinc-binding domain occupies 5 to 65 (GKCTRCQKTV…ANHYPVGGLS (61 aa)).

It localises to the cell projection. It is found in the pseudopodium. The protein resides in the cytoplasm. Its subcellular location is the cell cortex. The protein localises to the cytoskeleton. Its function is as follows. Binds to F-actin and may modulate the chemotactic response during early development and contribute to the maintenance of the strength of the actin cytoskeleton. This chain is LIM domain-containing protein D (limD), found in Dictyostelium discoideum (Social amoeba).